Here is a 425-residue protein sequence, read N- to C-terminus: Rho GTPase-activating protein 8 (425 aa).

In terms of domain architecture, CRAL-TRIO spans 13–168 (PFYDVARHGI…EVVRYDEKLQ (156 aa)). Residues 169-192 (NLHKGQPPPPTKTPPPRPPLPTQQ) form a disordered region. The segment covering 174-189 (QPPPPTKTPPPRPPLP) has biased composition (pro residues). The 187-residue stretch at 195–381 (VSLQYLRDKN…LLIEYYDKVF (187 aa)) folds into the Rho-GAP domain.

In terms of tissue distribution, highly expressed in skeletal muscle, lung and testis, and at lower levels in kidney, stomach and colon. Not detected in heart, liver, spleen, breast, brain, neonatal head or pancreas.

Functionally, GTPase activator for the Rho-type GTPases by converting them to an inactive GDP-bound state. The chain is Rho GTPase-activating protein 8 (Arhgap8) from Mus musculus (Mouse).